We begin with the raw amino-acid sequence, 899 residues long: Proline-rich transmembrane protein 4 (899 aa).

Positions 1-23 are cleaved as a signal peptide; that stretch reads MARHGCLGLGLFCCVLFAATVGP. Disordered stretches follow at residues 110–152 and 295–340; these read LTEW…RRST and TVPI…PEAP. 5 consecutive transmembrane segments (helical) span residues 370–390, 392–412, 430–450, 467–487, and 500–520; these read VGAL…LLPW, CPPG…AGTT, ALAW…GLGL, LAAL…GSAA, and GLHA…SCWG. A Phosphoserine modification is found at serine 641. Disordered regions lie at residues 769–797 and 839–869; these read TGGR…AWPA and PSGS…ASEL. Residues 840 to 851 show a composition bias toward low complexity; it reads SGSSPSLPASGS.

The protein localises to the membrane. This chain is Proline-rich transmembrane protein 4 (PRRT4), found in Homo sapiens (Human).